Reading from the N-terminus, the 976-residue chain is Villin-2 (976 aa).

Gelsolin-like repeat units lie at residues 27–77 (FEAV…DEAG), 148–188 (IRLK…QERA), 260–302 (GKME…DERK), 399–450 (GKVK…EDQD), 531–571 (NKAV…EQLE), and 633–674 (FQVE…KEKQ). Residues 769 to 917 (NSSSNRPAYS…SEIQPSGATF (149 aa)) are disordered. Basic and acidic residues predominate over residues 782-794 (RLNESHDGPRQRA). Low complexity-rich tracts occupy residues 795 to 812 (EALAALSSAFNSSSSSTK), 823 to 841 (SQASQRAAAVAALSQVLVA), and 848 to 858 (DTSPTRRSTSS). Ser-890 bears the Phosphoserine mark. The segment covering 908–917 (SEIQPSGATF) has biased composition (polar residues). The 66-residue stretch at 911–976 (QPSGATFTYE…DLLKKKFDLF (66 aa)) folds into the HP domain.

The protein belongs to the villin/gelsolin family. Expressed in all tissues examined. Mainly detected in the root epidermis and vasculature. Expressed in the root cap.

The protein localises to the cytoplasm. Its subcellular location is the cytoskeleton. Its function is as follows. Ca(2+)-regulated actin-binding protein. Involved in actin filaments bundling. Caps the barbed end of actin filaments and is able to sever them in a calcium-dependent manner. Required for the construction of actin collars in pollen tubes. Acts redundantly with VLN5 (AC Q9LVC6) to generate thick actin filament bundles and to regulate polarized pollen tube growth. Acts redundantly with VLN3 (AC O81645) to regulate directional organ growth and in sclerenchyma development. This chain is Villin-2, found in Arabidopsis thaliana (Mouse-ear cress).